The primary structure comprises 378 residues: Beta sliding clamp (378 aa).

It belongs to the beta sliding clamp family. Forms a ring-shaped head-to-tail homodimer around DNA which binds and tethers DNA polymerases and other proteins to the DNA. The DNA replisome complex has a single clamp-loading complex (3 tau and 1 each of delta, delta', psi and chi subunits) which binds 3 Pol III cores (1 core on the leading strand and 2 on the lagging strand) each with a beta sliding clamp dimer. Additional proteins in the replisome are other copies of gamma, psi and chi, Ssb, DNA helicase and RNA primase.

It is found in the cytoplasm. In terms of biological role, confers DNA tethering and processivity to DNA polymerases and other proteins. Acts as a clamp, forming a ring around DNA (a reaction catalyzed by the clamp-loading complex) which diffuses in an ATP-independent manner freely and bidirectionally along dsDNA. Initially characterized for its ability to contact the catalytic subunit of DNA polymerase III (Pol III), a complex, multichain enzyme responsible for most of the replicative synthesis in bacteria; Pol III exhibits 3'-5' exonuclease proofreading activity. The beta chain is required for initiation of replication as well as for processivity of DNA replication. In Streptococcus pneumoniae serotype 4 (strain ATCC BAA-334 / TIGR4), this protein is Beta sliding clamp (dnaN).